A 240-amino-acid chain; its full sequence is Uridylate kinase (240 aa).

ATP is bound at residue 14–17; the sequence is KLSG. Residue Gly56 coordinates UMP. ATP is bound by residues Gly57 and Arg61. UMP-binding positions include Asp76 and 137 to 144; that span reads TGNPFFTT. Residues Thr164, Tyr170, and Asp173 each contribute to the ATP site.

The protein belongs to the UMP kinase family. As to quaternary structure, homohexamer.

It localises to the cytoplasm. It carries out the reaction UMP + ATP = UDP + ADP. The protein operates within pyrimidine metabolism; CTP biosynthesis via de novo pathway; UDP from UMP (UMPK route): step 1/1. Its activity is regulated as follows. Inhibited by UTP. Catalyzes the reversible phosphorylation of UMP to UDP. The sequence is that of Uridylate kinase from Verminephrobacter eiseniae (strain EF01-2).